Consider the following 407-residue polypeptide: Arrestin homolog (407 aa).

This sequence belongs to the arrestin family.

The sequence is that of Arrestin homolog from Locusta migratoria (Migratory locust).